Here is a 407-residue protein sequence, read N- to C-terminus: Argininosuccinate synthase (407 aa).

ATP is bound by residues 16 to 24 (AYSGGLDTS) and Ala44. The L-citrulline site is built by Tyr96 and Ser101. Gly126 contributes to the ATP binding site. L-aspartate is bound by residues Thr128, Asn132, and Asp133. Residue Asn132 coordinates L-citrulline. Arg136, Ser185, Ser194, Glu270, and Tyr282 together coordinate L-citrulline.

It belongs to the argininosuccinate synthase family. Type 1 subfamily. As to quaternary structure, homotetramer.

It localises to the cytoplasm. The catalysed reaction is L-citrulline + L-aspartate + ATP = 2-(N(omega)-L-arginino)succinate + AMP + diphosphate + H(+). It functions in the pathway amino-acid biosynthesis; L-arginine biosynthesis; L-arginine from L-ornithine and carbamoyl phosphate: step 2/3. In Shewanella denitrificans (strain OS217 / ATCC BAA-1090 / DSM 15013), this protein is Argininosuccinate synthase.